Here is a 345-residue protein sequence, read N- to C-terminus: Dimethyladenosine transferase 1, mitochondrial (345 aa).

A mitochondrion-targeting transit peptide spans 1–27 (MAASGKLGTFRLPPLPTIREIIKLFGL). S-adenosyl-L-methionine-binding residues include Leu38, Gly63, Glu85, Lys86, Asp111, Val112, and Asn141.

It belongs to the class I-like SAM-binding methyltransferase superfamily. rRNA adenine N(6)-methyltransferase family. KsgA subfamily. In terms of assembly, interacts with mitochondrial RNA polymerase POLRMT. Interacts with TFAM. Remains bound to the maturing mtSSU until the late stages of assembly. In terms of tissue distribution, ubiquitously expressed.

The protein localises to the mitochondrion. The catalysed reaction is adenosine(N)/adenosine(N+1) in rRNA + 4 S-adenosyl-L-methionine = N(6)-dimethyladenosine(N)/N(6)-dimethyladenosine(N+1) in rRNA + 4 S-adenosyl-L-homocysteine + 4 H(+). In terms of biological role, mitochondrial methyltransferase which uses S-adenosyl methionine to dimethylate two highly conserved adjacent adenosine residues (A1006 and A1007) within the loop of helix 45 at the 3-prime end of 12S rRNA, thereby regulating the assembly or stability of the small subunit of the mitochondrial ribosome. Also required for basal transcription of mitochondrial DNA, probably via its interaction with POLRMT and TFAM. Stimulates transcription independently of the methyltransferase activity. This Mus musculus (Mouse) protein is Dimethyladenosine transferase 1, mitochondrial (Tfb1m).